Here is an 872-residue protein sequence, read N- to C-terminus: Alanine--tRNA ligase (872 aa).

4 residues coordinate Zn(2+): His-567, His-571, Cys-669, and His-673.

It belongs to the class-II aminoacyl-tRNA synthetase family. Requires Zn(2+) as cofactor.

The protein localises to the cytoplasm. The enzyme catalyses tRNA(Ala) + L-alanine + ATP = L-alanyl-tRNA(Ala) + AMP + diphosphate. In terms of biological role, catalyzes the attachment of alanine to tRNA(Ala) in a two-step reaction: alanine is first activated by ATP to form Ala-AMP and then transferred to the acceptor end of tRNA(Ala). Also edits incorrectly charged Ser-tRNA(Ala) and Gly-tRNA(Ala) via its editing domain. This is Alanine--tRNA ligase from Streptococcus pyogenes serotype M2 (strain MGAS10270).